A 150-amino-acid chain; its full sequence is MELILLEKVSNLGNLGDRVRVRPGYGRNYLLPYGKAKMATEENIRYFEERRAELEKAAREAEQAAQARLEQLQELTLTIKAKVGEQGKLFGSVGPADIAEAAEQAGVELARREVRMPEGPIRVAGEYDVQVSLYTDVEGTVKVVVEGDAS.

Belongs to the bacterial ribosomal protein bL9 family.

Functionally, binds to the 23S rRNA. This chain is Large ribosomal subunit protein bL9, found in Halorhodospira halophila (strain DSM 244 / SL1) (Ectothiorhodospira halophila (strain DSM 244 / SL1)).